The following is a 342-amino-acid chain: P2Y purinoceptor 12 (342 aa).

The Extracellular segment spans residues 1–27 (MQAIDNLTSAPGNTSLCTRDYKITQVL). N6 and N13 each carry an N-linked (GlcNAc...) asparagine glycan. Cystine bridges form between C17–C270 and C97–C175. Residues 28–50 (FPLLYTVLFFVGLITNSLAMRIF) traverse the membrane as a helical segment. Over 51–61 (FQIRSKSNFII) the chain is Cytoplasmic. S55 and S57 each carry phosphoserine. Residues 62–82 (FLKNTVISDLLMILTFPFKIL) traverse the membrane as a helical segment. Residues 83 to 97 (SDAKLGAGPLRTFVC) are Extracellular-facing. The ADP site is built by R93, C97, and Y105. Residues 98–118 (QVTSVIFYFTMYISISFLGLI) traverse the membrane as a helical segment. Residues 119–142 (TIDRYQKTTRPFKTSNPKNLLGAK) are Cytoplasmic-facing. The helical transmembrane segment at 143–162 (ILSVLIWAFMFLLSLPNMIL) threads the bilayer. ADP contacts are provided by residues 156–159 (SLPN), 175–179 (CSFLK), H187, and N191. Residues 163–185 (TNRRPRDKNVKKCSFLKSEFGLV) lie on the Extracellular side of the membrane. The helical transmembrane segment at 186-207 (WHEIVNYICQVIFWINFLIVIV) threads the bilayer. The Cytoplasmic portion of the chain corresponds to 208–233 (CYTLITKELYRSYVRTRGVGKVPRKK). A helical transmembrane segment spans residues 234–259 (VNVKVFIIIAVFFICFVPFHFARIPY). Residues 256–259 (RIPY), Q263, and K280 contribute to the ADP site. Residues 260–278 (TLSQTRDVFDCAAENTLFY) lie on the Extracellular side of the membrane. The chain crosses the membrane as a helical span at residues 279–298 (VKESTLWLTSLNACLDPFIY). At 299 to 342 (FFLCKSFRNSLISMLKCPNSATSQSQDNRKKEQDGGDPNEETPM) the chain is on the cytoplasmic side. The segment at 317 to 342 (NSATSQSQDNRKKEQDGGDPNEETPM) is disordered. The span at 333–342 (GGDPNEETPM) shows a compositional bias: acidic residues.

The protein belongs to the G-protein coupled receptor 1 family.

The protein localises to the cell membrane. Functionally, receptor for ADP and ATP coupled to G-proteins that inhibit the adenylyl cyclase second messenger system. Required for normal platelet aggregation and blood coagulation. The sequence is that of P2Y purinoceptor 12 (P2RY12) from Macaca fascicularis (Crab-eating macaque).